Reading from the N-terminus, the 822-residue chain is Probable alpha,alpha-trehalose-phosphate synthase [UDP-forming] 2 (822 aa).

Residues 12–479 (PRLLVVANRL…GLDFMSELNG (468 aa)) are glycosyltransferase.

This sequence in the N-terminal section; belongs to the glycosyltransferase 20 family. In the C-terminal section; belongs to the trehalose phosphatase family.

It carries out the reaction D-glucose 6-phosphate + UDP-alpha-D-glucose = alpha,alpha-trehalose 6-phosphate + UDP + H(+). The polypeptide is Probable alpha,alpha-trehalose-phosphate synthase [UDP-forming] 2 (TPS2) (Arabidopsis thaliana (Mouse-ear cress)).